A 406-amino-acid chain; its full sequence is Secretion apparatus protein BsaZ (406 aa).

The next 4 membrane-spanning stretches (helical) occupy residues 28–48, 80–100, 137–157, and 175–195; these read IVAL…VDLT, IAAP…LVQS, ALLY…LYHA, and IVLT…VLIL. The interval 341–406 is disordered; the sequence is AANRGGPPPE…APARTGDQNA (66 aa). Over residues 370–399 the composition is skewed to low complexity; that stretch reads DACADNAFPDDAPPGAAAPNAGSPDGGAPA.

The protein belongs to the type III secretion exporter family.

It is found in the cell membrane. Part of the bsa type III secretion system, is involved in the intracellular replication of invading bacteria inside the host cell. Probably necessary for the lysis of the vacuole membrane and escape into the host cell cytoplasm. The protein is Secretion apparatus protein BsaZ (bsaZ) of Burkholderia pseudomallei (strain 668).